Consider the following 382-residue polypeptide: Mannitol-1-phosphate 5-dehydrogenase (382 aa).

3–14 lines the NAD(+) pocket; the sequence is ALHFGAGNIGRG. K269 carries the post-translational modification N6-acetyllysine.

The protein belongs to the mannitol dehydrogenase family.

The catalysed reaction is D-mannitol 1-phosphate + NAD(+) = beta-D-fructose 6-phosphate + NADH + H(+). This is Mannitol-1-phosphate 5-dehydrogenase from Escherichia coli (strain K12 / MC4100 / BW2952).